A 488-amino-acid polypeptide reads, in one-letter code: Glutamyl-tRNA(Gln) amidotransferase subunit A (488 aa).

Active-site charge relay system residues include Lys-77 and Ser-152. Ser-176 serves as the catalytic Acyl-ester intermediate.

The protein belongs to the amidase family. GatA subfamily. In terms of assembly, heterotrimer of A, B and C subunits.

It carries out the reaction L-glutamyl-tRNA(Gln) + L-glutamine + ATP + H2O = L-glutaminyl-tRNA(Gln) + L-glutamate + ADP + phosphate + H(+). Allows the formation of correctly charged Gln-tRNA(Gln) through the transamidation of misacylated Glu-tRNA(Gln) in organisms which lack glutaminyl-tRNA synthetase. The reaction takes place in the presence of glutamine and ATP through an activated gamma-phospho-Glu-tRNA(Gln). This chain is Glutamyl-tRNA(Gln) amidotransferase subunit A, found in Streptococcus pyogenes serotype M28 (strain MGAS6180).